The sequence spans 234 residues: UPF0173 metal-dependent hydrolase R01310 (234 aa).

Belongs to the UPF0173 family.

This is UPF0173 metal-dependent hydrolase R01310 from Rhizobium meliloti (strain 1021) (Ensifer meliloti).